Consider the following 177-residue polypeptide: uncharacterized protein (177 aa).

This is an uncharacterized protein from Acanthamoeba polyphaga (Amoeba).